The following is a 441-amino-acid chain: Mitochondrial distribution and morphology protein 12 (441 aa).

Positions 1–441 (MSIDIDWERA…VYPSFWTFLV (441 aa)) constitute an SMP-LTD domain. 2 disordered regions span residues 68-89 (DFYE…PMRE) and 183-289 (RAVT…RMRE). 2 stretches are compositionally biased toward polar residues: residues 226 to 245 (SRPS…SVST) and 253 to 263 (PSQTLLANNPG).

The protein belongs to the MDM12 family. As to quaternary structure, component of the ER-mitochondria encounter structure (ERMES) or MDM complex, composed of MMM1, MDM10, MDM12 and MDM34. An MMM1 homodimer associates with one molecule of MDM12 on each side in a pairwise head-to-tail manner, and the SMP-LTD domains of MMM1 and MDM12 generate a continuous hydrophobic tunnel for phospholipid trafficking.

The protein resides in the mitochondrion outer membrane. The protein localises to the endoplasmic reticulum membrane. Component of the ERMES/MDM complex, which serves as a molecular tether to connect the endoplasmic reticulum (ER) and mitochondria. Components of this complex are involved in the control of mitochondrial shape and protein biogenesis, and function in nonvesicular lipid trafficking between the ER and mitochondria. MDM12 is required for the interaction of the ER-resident membrane protein MMM1 and the outer mitochondrial membrane-resident beta-barrel protein MDM10. The MDM12-MMM1 subcomplex functions in the major beta-barrel assembly pathway that is responsible for biogenesis of all mitochondrial outer membrane beta-barrel proteins, and acts in a late step after the SAM complex. The MDM10-MDM12-MMM1 subcomplex further acts in the TOM40-specific pathway after the action of the MDM12-MMM1 complex. Essential for establishing and maintaining the structure of mitochondria and maintenance of mtDNA nucleoids. In Paracoccidioides lutzii (strain ATCC MYA-826 / Pb01) (Paracoccidioides brasiliensis), this protein is Mitochondrial distribution and morphology protein 12.